The sequence spans 121 residues: Putative iron-sulfur cluster insertion protein ErpA (121 aa).

Cys-49, Cys-113, and Cys-115 together coordinate iron-sulfur cluster.

The protein belongs to the HesB/IscA family. In terms of assembly, homodimer. The cofactor is iron-sulfur cluster.

Functionally, required for insertion of 4Fe-4S clusters. This chain is Putative iron-sulfur cluster insertion protein ErpA, found in Nitrosomonas europaea (strain ATCC 19718 / CIP 103999 / KCTC 2705 / NBRC 14298).